Reading from the N-terminus, the 815-residue chain is RNA-binding protein 5 (815 aa).

A disordered region spans residues 1-93 (MGSDKRVSRT…EHDYRHDISD (93 aa)). Phosphoserine occurs at positions 18, 59, 69, 72, and 78. One can recognise an RRM 1 domain in the interval 98–178 (KTIMLRGLPI…KHIAMHYSNP (81 aa)). The segment at 181 to 210 (KFEDWLCNKCCLNNFRKRLKCFRCGADKFD) adopts a RanBP2-type zinc-finger fold. In terms of domain architecture, RRM 2 spans 231 to 315 (DTIILRNIAP…KTIGVDFAKS (85 aa)). Residues 321–809 (VLSDGNRVSA…KDAVRKAMFA (489 aa)) are required for interaction with U2AF2. The span at 411–422 (QSPQLYNQTSNP) shows a compositional bias: polar residues. Disordered stretches follow at residues 411-468 (QSPQ…DESS) and 507-540 (PAAE…AQQI). The span at 426-446 (PTEEAQPSTSTSTQAPAASPT) shows a compositional bias: low complexity. S444 is modified (phosphoserine). Residues 452 to 535 (TKYAVPDTST…KEKKEKPKSK (84 aa)) form a sufficient for interaction with ACIN1, PRPF8, SFRS3, SNRPB, SNRPN, SNRNP70 and SNRNP200 region. 2 positions are modified to phosphoserine: S621 and S624. Residues 647–677 (MACLLCRRQFPNKDALVRHQQLSDLHKQNMD) form a C2H2-type; atypical zinc finger. In terms of domain architecture, G-patch spans 743–789 (HSNIGNKMLQAMGWREGSGLGRKCQGITAPIEAQVRLKGAGLGAKGS).

The protein belongs to the RBM5/RBM10 family. As to quaternary structure, component of the spliceosome A complex (also known as the prespliceosome). Appears to dissociate from the spliceosome upon formation of the spliceosome B complex (also known as the precatalytic spliceosome), in which the heterotrimeric U4/U6.U5 snRNPs are bound. Interacts with U2AF2; this interaction is direct. Also interacts with ACIN1, PRPF8, SFRS3, SNRPB, SNRPN, SNRNP70 and SNRNP200; these interactions may be indirect. In terms of tissue distribution, isoform 5 is widely expressed in normal tissues and is expressed at increased levels in T-leukemic cell lines.

The protein resides in the nucleus. Component of the spliceosome A complex. Binds to ssRNA containing the consensus sequence 5'-AGGUAA-3'. Regulates alternative splicing of a number of mRNAs. May modulate splice site pairing after recruitment of the U1 and U2 snRNPs to the 5' and 3' splice sites of the intron. May both positively and negatively regulate apoptosis by regulating the alternative splicing of several genes involved in this process, including FAS and CASP2/caspase-2. In the case of FAS, promotes exclusion of exon 6 thereby producing a soluble form of FAS that inhibits apoptosis. In the case of CASP2/caspase-2, promotes exclusion of exon 9 thereby producing a catalytically active form of CASP2/Caspase-2 that induces apoptosis. In Homo sapiens (Human), this protein is RNA-binding protein 5 (RBM5).